The following is a 260-amino-acid chain: Adenosylcobinamide-GDP ribazoletransferase (260 aa).

7 helical membrane-spanning segments follow: residues 42 to 62, 64 to 84, 117 to 137, 144 to 164, 192 to 212, 214 to 234, and 240 to 260; these read PLAGGILGLLAGVALLIANAI, LPPLAAALIAIGALAAMTGAL, FAALTLVIWTGVKASLLMAII, YALLALIGTEAASRAGMLAFW, GLGLALLAIGFLPSGGMVALI, ALVLMTVVLFGFARLCMAKIG, and TLGAAQQIGSLAALIGLVMAL.

It belongs to the CobS family. The cofactor is Mg(2+).

Its subcellular location is the cell inner membrane. The catalysed reaction is alpha-ribazole + adenosylcob(III)inamide-GDP = adenosylcob(III)alamin + GMP + H(+). The enzyme catalyses alpha-ribazole 5'-phosphate + adenosylcob(III)inamide-GDP = adenosylcob(III)alamin 5'-phosphate + GMP + H(+). The protein operates within cofactor biosynthesis; adenosylcobalamin biosynthesis; adenosylcobalamin from cob(II)yrinate a,c-diamide: step 7/7. Its function is as follows. Joins adenosylcobinamide-GDP and alpha-ribazole to generate adenosylcobalamin (Ado-cobalamin). Also synthesizes adenosylcobalamin 5'-phosphate from adenosylcobinamide-GDP and alpha-ribazole 5'-phosphate. The protein is Adenosylcobinamide-GDP ribazoletransferase of Brucella abortus (strain S19).